Consider the following 237-residue polypeptide: Protein GrpE (237 aa).

Disordered regions lie at residues Met1–Gln52 and Lys200–Val237. A compositionally biased stretch (polar residues) spans Ala27–Ser40. Residues Gly204 to Ser218 show a composition bias toward low complexity.

Belongs to the GrpE family. In terms of assembly, homodimer.

It localises to the cytoplasm. Its function is as follows. Participates actively in the response to hyperosmotic and heat shock by preventing the aggregation of stress-denatured proteins, in association with DnaK and GrpE. It is the nucleotide exchange factor for DnaK and may function as a thermosensor. Unfolded proteins bind initially to DnaJ; upon interaction with the DnaJ-bound protein, DnaK hydrolyzes its bound ATP, resulting in the formation of a stable complex. GrpE releases ADP from DnaK; ATP binding to DnaK triggers the release of the substrate protein, thus completing the reaction cycle. Several rounds of ATP-dependent interactions between DnaJ, DnaK and GrpE are required for fully efficient folding. The protein is Protein GrpE of Prochlorococcus marinus (strain MIT 9303).